A 308-amino-acid polypeptide reads, in one-letter code: MKQFLTAAIVTLLMTAGYYHLQEDDTNDFERWALKNNKFYTESEKLYRMEIYNSNKRMIEEHNQREDVTYQMGENQFMTLSHEEFVDLYLQKSDSSVNIMGASLPEVQLEGLGAVDWRNYTTVKEQGQCASGWAFSVSNSLEAWYAIRGFQKINASTQQIVDCDYNNTGCSGGYNAYAMEYVLRVGLVSSTNYPYVAKNQTCKQSRNGTYFINGYSFVGGSQSNLQYYLNNYPISVGVEASNWQFYRSGLFSNCSSNGTNHYALAVGFDSANNWIVQNSWGTQWGESGNIRLYPQNTCGILNYPYQVY.

Positions 1-21 (MKQFLTAAIVTLLMTAGYYHL) are cleaved as a signal peptide. Positions 22–110 (QEDDTNDFER…GASLPEVQLE (89 aa)) are cleaved as a propeptide — activation peptide. 2 cysteine pairs are disulfide-bonded: Cys129–Cys170 and Cys254–Cys298. Catalysis depends on residues His261 and Asn278.

It belongs to the peptidase C1 family.

It is found in the secreted. It catalyses the reaction Specificity close to that of papain. As compared to cathepsin B, cathepsin L exhibits higher activity toward protein substrates, but has little activity on Z-Arg-Arg-NHMec, and no peptidyl-dipeptidase activity.. Functionally, may be involved in extracellular digestion. The polypeptide is Putative cathepsin L 3 (Paramecium tetraurelia).